We begin with the raw amino-acid sequence, 95 residues long: Large ribosomal subunit protein bL25 (95 aa).

It belongs to the bacterial ribosomal protein bL25 family. As to quaternary structure, part of the 50S ribosomal subunit; part of the 5S rRNA/L5/L18/L25 subcomplex. Contacts the 5S rRNA. Binds to the 5S rRNA independently of L5 and L18.

This is one of the proteins that binds to the 5S RNA in the ribosome where it forms part of the central protuberance. In Shewanella loihica (strain ATCC BAA-1088 / PV-4), this protein is Large ribosomal subunit protein bL25.